We begin with the raw amino-acid sequence, 441 residues long: MAGUK p55 subfamily member 4 (441 aa).

The PDZ domain occupies 1–84 (MRTVCLVKNQ…TIMFKVIPVS (84 aa)). The region spanning 91-161 (QTTVYVRAMI…PSNHLLKRKQ (71 aa)) is the SH3 domain. In terms of domain architecture, Guanylate kinase-like spans 232 to 421 (HRLIVLVGPS…ARAQLLSAIQ (190 aa)). Residues 373 to 430 (VDMKFKDEDLQEMEELAQKMESQFGQFFDHVIVNDNLQDARAQLLSAIQKAEEELQWV) adopt a coiled-coil conformation.

Belongs to the MAGUK family. As to quaternary structure, interacts with MPDZ. May interact with GRIA2. Forms a complex with CRB1 and PALS1. Interacts with FASLG. Highly expressed in brain and detected in lung, and bone (at protein level). Also expressed in intestine and spleen.

It localises to the cytoplasm. Functionally, may play a role in retinal photoreceptors development. The chain is MAGUK p55 subfamily member 4 (Mpp4) from Rattus norvegicus (Rat).